Here is a 446-residue protein sequence, read N- to C-terminus: MTEQKRKIEKLTGVKGMNDILPQDAGLWEFFEATVKSLLRAYGYQNIRTPIVEHTQLFTRGIGEVTDIVEKEMYSFTDALNGENLTMRPENTAAVVRASIEHNMLYDGPKRLWYIGPMFRHERPQRGRYRQFHQVGVEALGFAGPDADAEIIMMCQRLWDDLGLTGIKLEINSLGLAEERAAHRVELIKYLEQFADVLDEDAKRRLYTNPLRVLDTKNPALQEIAQNAPKLIDFLGDESRAHFEGLQRLLLANNIPFKINPRLVRGLDYYNLTVFEWVTDKLGAQGTVAAGGRYDPLIEQLGGKPTAACGWAMGIERILELLKEDDLAPEQEGVDVYVVHQGETAREQAFIAAERLRDTGLDVIFHCSADGAPASFKSQMKRADASGAAFAVIFGEEEVANGTVGVKALRGAGGDGEKNVQQTVPVEGLTEFLINAMVASAEDGDD.

It belongs to the class-II aminoacyl-tRNA synthetase family. As to quaternary structure, homodimer.

The protein resides in the cytoplasm. The enzyme catalyses tRNA(His) + L-histidine + ATP = L-histidyl-tRNA(His) + AMP + diphosphate + H(+). The polypeptide is Histidine--tRNA ligase (Burkholderia lata (strain ATCC 17760 / DSM 23089 / LMG 22485 / NCIMB 9086 / R18194 / 383)).